Here is a 329-residue protein sequence, read N- to C-terminus: Cytosolic arginine sensor for mTORC1 subunit 2 (329 aa).

ACT domains are found at residues 72–140 (ADAT…HTLS) and 262–322 (ELWK…HALK).

The protein belongs to the GATS family. In terms of assembly, forms homodimers and heterodimers with CASTOR1. Interacts with the GATOR2 complex which is composed of MIOS, SEC13, SEH1L, WDR24 and WDR59; the interaction is not regulated by arginine.

It is found in the cytoplasm. It localises to the cytosol. Functions as a negative regulator of the TORC1 signaling pathway through the GATOR complex. As part of homodimers or heterodimers with CASTOR1, directly binds and inhibits the GATOR subcomplex GATOR2 and thereby mTORC1. Does not directly bind arginine, but binding of arginine to CASTOR1 disrupts the interaction of CASTOR2-containing heterodimers with GATOR2 which can in turn activate mTORC1 and the TORC1 signaling pathway. The sequence is that of Cytosolic arginine sensor for mTORC1 subunit 2 from Mus musculus (Mouse).